A 377-amino-acid chain; its full sequence is MKFELDTTQGRARRGRLIFDRGTVETPAFMPVGTYGTVKGMTPEEVRATGADILLGNTFHLWLRPGEEIMRKHGDLHDFMNWQRPILTDSGGFQVFSLGDIRKITEEGVHFRSPINGEKIFLDPEKSMQIQDSLGSDVVMIFDECTPYPATEDEARKSMQMSLRWAQRSRDEFDRLENPNALFGIIQGGVYEDLRDESLTGLVNIGFDGYAIGGLAVGEPKPDMHRILEHVCPQIPADKPRYLMGVGKPEDLVEGVRRGVDMFDCVMPTRNARNGHLFTSEGVIKIRNARHRDDTAPLDEKCDCYTCKNYSRAYLYHLDRCNEILGARLNTIHNLRYYQMLMEGLRGAIETGTLDAFVSDFYTGLGREVPEVPELVD.

D89 acts as the Proton acceptor in catalysis. Residues 89–93 (DSGGF), D143, Q187, and G214 contribute to the substrate site. Residues 245–251 (GVGKPED) form an RNA binding region. D264 acts as the Nucleophile in catalysis. Residues 269-273 (TRNAR) are RNA binding; important for wobble base 34 recognition. Zn(2+) is bound by residues C302, C304, C307, and H333.

It belongs to the queuine tRNA-ribosyltransferase family. As to quaternary structure, homodimer. Within each dimer, one monomer is responsible for RNA recognition and catalysis, while the other monomer binds to the replacement base PreQ1. Requires Zn(2+) as cofactor.

It carries out the reaction 7-aminomethyl-7-carbaguanine + guanosine(34) in tRNA = 7-aminomethyl-7-carbaguanosine(34) in tRNA + guanine. It functions in the pathway tRNA modification; tRNA-queuosine biosynthesis. Its function is as follows. Catalyzes the base-exchange of a guanine (G) residue with the queuine precursor 7-aminomethyl-7-deazaguanine (PreQ1) at position 34 (anticodon wobble position) in tRNAs with GU(N) anticodons (tRNA-Asp, -Asn, -His and -Tyr). Catalysis occurs through a double-displacement mechanism. The nucleophile active site attacks the C1' of nucleotide 34 to detach the guanine base from the RNA, forming a covalent enzyme-RNA intermediate. The proton acceptor active site deprotonates the incoming PreQ1, allowing a nucleophilic attack on the C1' of the ribose to form the product. After dissociation, two additional enzymatic reactions on the tRNA convert PreQ1 to queuine (Q), resulting in the hypermodified nucleoside queuosine (7-(((4,5-cis-dihydroxy-2-cyclopenten-1-yl)amino)methyl)-7-deazaguanosine). The protein is Queuine tRNA-ribosyltransferase of Shewanella denitrificans (strain OS217 / ATCC BAA-1090 / DSM 15013).